The sequence spans 154 residues: Transcriptional repressor NrdR (154 aa).

A zinc finger lies at 3–34 (CPFCRHPDSRVVDSREADEGQAIRRRRSCPEC). An ATP-cone domain is found at 46 to 136 (LAVVKRSGVT…VYRGFSSAED (91 aa)).

The protein belongs to the NrdR family. It depends on Zn(2+) as a cofactor.

In terms of biological role, negatively regulates transcription of bacterial ribonucleotide reductase nrd genes and operons by binding to NrdR-boxes. This Mycobacteroides abscessus (strain ATCC 19977 / DSM 44196 / CCUG 20993 / CIP 104536 / JCM 13569 / NCTC 13031 / TMC 1543 / L948) (Mycobacterium abscessus) protein is Transcriptional repressor NrdR.